The following is a 429-amino-acid chain: Protein AST1 (429 aa).

Interacts with PMA1.

The protein localises to the cell membrane. The protein resides in the membrane raft. Its subcellular location is the golgi apparatus membrane. It localises to the late endosome membrane. Its function is as follows. Lipid raft-associated protein involved in the targeting of PMA1 from Golgi to the plasma membrane. May induce clustering of PMA1, which facilitates partition of PMA1 into lipid rafts after leaving the ER and its transport to the cell surface. In Saccharomyces cerevisiae (strain ATCC 204508 / S288c) (Baker's yeast), this protein is Protein AST1.